The primary structure comprises 108 residues: Putative transmembrane protein ORF108 (108 aa).

Transmembrane regions (helical) follow at residues 11–31, 33–53, and 69–89; these read FIMG…SSII, IAMT…TVHF, and VGFL…LLII.

It is found in the host membrane. This is Putative transmembrane protein ORF108 from Acidianus hospitalis (AFV-1).